Here is a 78-residue protein sequence, read N- to C-terminus: DNA-directed RNA polymerase subunit Rpo5 (78 aa).

This sequence belongs to the archaeal Rpo5/eukaryotic RPB5 RNA polymerase subunit family. Part of the RNA polymerase complex.

Its subcellular location is the cytoplasm. It carries out the reaction RNA(n) + a ribonucleoside 5'-triphosphate = RNA(n+1) + diphosphate. Its function is as follows. DNA-dependent RNA polymerase (RNAP) catalyzes the transcription of DNA into RNA using the four ribonucleoside triphosphates as substrates. This Methanosarcina mazei (strain ATCC BAA-159 / DSM 3647 / Goe1 / Go1 / JCM 11833 / OCM 88) (Methanosarcina frisia) protein is DNA-directed RNA polymerase subunit Rpo5.